The chain runs to 548 residues: Glucan endo-1,3-beta-glucosidase (548 aa).

Positions 1 to 36 form a signal peptide, tat-type signal; that stretch reads MPHDRKNSSRRAWAALCAAVLAVSGALVGVAAPASA. The 359-residue stretch at 38 to 396 folds into the GH64 domain; the sequence is PATIPLTITN…PQAAYIKLDP (359 aa). The active-site Proton donor is the E153. The Proton acceptor role is filled by D169. Residues 422–548 enclose the Ricin B-type lectin domain; sequence GTGALRIGST…NQTEAQRWTL (127 aa).

Belongs to the glycosyl hydrolase 64 family. Post-translationally, predicted to be exported by the Tat system. The position of the signal peptide cleavage has not been experimentally proven.

It is found in the periplasm. The enzyme catalyses Hydrolysis of (1-&gt;3)-beta-D-glucosidic linkages in (1-&gt;3)-beta-D-glucans.. Functionally, lysis of cellular walls containing beta-1,3-glucans. Implicated in the defense against fungal pathogens. The sequence is that of Glucan endo-1,3-beta-glucosidase (glcI) from Arthrobacter sp. (strain YCWD3).